Here is a 520-residue protein sequence, read N- to C-terminus: Dihydropyrimidinase 2 (520 aa).

Residues His-59, His-61, and Lys-152 each contribute to the Zn(2+) site. Residue Lys-152 is modified to N6-carboxylysine. Tyr-157 contributes to the substrate binding site. Residues His-185 and His-241 each contribute to the Zn(2+) site. Ser-291 is a binding site for substrate. Position 319 (Asp-319) interacts with Zn(2+). A substrate-binding site is contributed by Asn-340.

This sequence belongs to the metallo-dependent hydrolases superfamily. Hydantoinase/dihydropyrimidinase family. Homotetramer. Zn(2+) is required as a cofactor. Post-translationally, carboxylation allows a single lysine to coordinate two zinc ions. As to expression, body wall muscles.

The enzyme catalyses 5,6-dihydrouracil + H2O = 3-(carbamoylamino)propanoate + H(+). This Caenorhabditis elegans protein is Dihydropyrimidinase 2 (dhp-2).